We begin with the raw amino-acid sequence, 193 residues long: Probable DNA-directed RNA polymerase subunit delta (193 aa).

The region spanning 14 to 83 (LSMIEVARAI…GDNKWGLRSW (70 aa)) is the HTH HARE-type domain. Acidic residues-rich tracts occupy residues 119–133 (EDAI…EDEN) and 143–193 (YDND…ETND). Residues 119–193 (EDAIDYNDDD…DDDYEDETND (75 aa)) form a disordered region.

The protein belongs to the RpoE family. As to quaternary structure, RNAP is composed of a core of 2 alpha, a beta and a beta' subunits. The core is associated with a delta subunit and one of several sigma factors.

In terms of biological role, participates in both the initiation and recycling phases of transcription. In the presence of the delta subunit, RNAP displays an increased specificity of transcription, a decreased affinity for nucleic acids, and an increased efficiency of RNA synthesis because of enhanced recycling. The protein is Probable DNA-directed RNA polymerase subunit delta of Streptococcus thermophilus (strain CNRZ 1066).